We begin with the raw amino-acid sequence, 257 residues long: tRNA pseudouridine synthase A (257 aa).

Catalysis depends on Asp53, which acts as the Nucleophile. Residue Tyr111 coordinates substrate.

This sequence belongs to the tRNA pseudouridine synthase TruA family. Homodimer.

The enzyme catalyses uridine(38/39/40) in tRNA = pseudouridine(38/39/40) in tRNA. Formation of pseudouridine at positions 38, 39 and 40 in the anticodon stem and loop of transfer RNAs. This is tRNA pseudouridine synthase A from Xanthomonas axonopodis pv. citri (strain 306).